The chain runs to 297 residues: Urease accessory protein UreD (297 aa).

Belongs to the UreD family. UreD, UreF and UreG form a complex that acts as a GTP-hydrolysis-dependent molecular chaperone, activating the urease apoprotein by helping to assemble the nickel containing metallocenter of UreC. The UreE protein probably delivers the nickel.

The protein localises to the cytoplasm. Its function is as follows. Required for maturation of urease via the functional incorporation of the urease nickel metallocenter. In Anaeromyxobacter sp. (strain Fw109-5), this protein is Urease accessory protein UreD.